Here is a 496-residue protein sequence, read N- to C-terminus: Omega-crystallin (496 aa).

The protein belongs to the aldehyde dehydrogenase family. As to expression, lens.

Functionally, omega-crystallins are structural components of squids and octopi eye lens. Contains relatively little if any DHAL activity. In Enteroctopus dofleini (North Pacific giant octopus), this protein is Omega-crystallin.